The following is a 384-amino-acid chain: Fructose-1,6-bisphosphate aldolase/phosphatase (384 aa).

D11 (proton acceptor; for FBP phosphatase activity) is an active-site residue. D11, H18, D52, and D53 together coordinate Mg(2+). H18 is a binding site for beta-D-fructose 1,6-bisphosphate. Dihydroxyacetone phosphate is bound at residue H18. A beta-D-fructose 1,6-bisphosphate-binding site is contributed by Y90. Q94 provides a ligand contact to Mg(2+). Residue 103 to 104 (GN) coordinates beta-D-fructose 1,6-bisphosphate. A Mg(2+)-binding site is contributed by D131. K132 is a binding site for beta-D-fructose 1,6-bisphosphate. K132 is a binding site for dihydroxyacetone phosphate. Y228 (proton donor/acceptor; for FBP aldolase activity) is an active-site residue. K231, D232, and D233 together coordinate Mg(2+). K231 (schiff-base intermediate with DHAP; for FBP aldolase activity) is an active-site residue. Residues 241–242 (QH), R265, D286, and Y347 each bind beta-D-fructose 1,6-bisphosphate. Dihydroxyacetone phosphate contacts are provided by R265 and D286.

This sequence belongs to the FBP aldolase/phosphatase family. Homooctamer; dimer of tetramers. The cofactor is Mg(2+).

It catalyses the reaction beta-D-fructose 1,6-bisphosphate + H2O = beta-D-fructose 6-phosphate + phosphate. The enzyme catalyses beta-D-fructose 1,6-bisphosphate = D-glyceraldehyde 3-phosphate + dihydroxyacetone phosphate. Its pathway is carbohydrate biosynthesis; gluconeogenesis. Catalyzes two subsequent steps in gluconeogenesis: the aldol condensation of dihydroxyacetone phosphate (DHAP) and glyceraldehyde-3-phosphate (GA3P) to fructose-1,6-bisphosphate (FBP), and the dephosphorylation of FBP to fructose-6-phosphate (F6P). The protein is Fructose-1,6-bisphosphate aldolase/phosphatase of Sulfurisphaera tokodaii (strain DSM 16993 / JCM 10545 / NBRC 100140 / 7) (Sulfolobus tokodaii).